Consider the following 394-residue polypeptide: Probable sugar efflux transporter (394 aa).

Transmembrane regions (helical) follow at residues 15–35, 50–70, 79–99, 109–129, 137–157, 168–188, 209–229, 249–269, 272–292, 299–319, 333–353, and 362–382; these read VLMLAIAAFIFNTTEFVPVGL, VGLMLTIYAWVVALMSLPMML, MLLMIIFVMFVASHALSSVAW, IGIALSHAIFWSITASLAIRV, QALSMMATGTALAMVLGLPIG, ITFAVIGAVAFVTMLLLLKLL, PALVALYLLIAITVTAHYTAY, FLLLIFGAAGIVGSVLFSIYG, FPATFLLAAIGLITLSMMCLY, LAVSTLCVIWGIAVMVMGLAV, VAMSLLSGIYNIGIGAGALLG, and MASVGYVGGAIGILSLLWCAW.

This sequence belongs to the major facilitator superfamily. SotB (TC 2.A.1.2) family.

It is found in the cell inner membrane. Functionally, involved in the efflux of sugars. The physiological role may be the reduction of the intracellular concentration of toxic sugars or sugar metabolites. In Erwinia tasmaniensis (strain DSM 17950 / CFBP 7177 / CIP 109463 / NCPPB 4357 / Et1/99), this protein is Probable sugar efflux transporter.